The chain runs to 727 residues: Catalase-peroxidase (727 aa).

Residues 1–26 (MDTKVETGGKCPVAHGPAGAKGRGNR) form a disordered region. Positions 97-219 (WHSAGTYRIT…LGAVQMGLIY (123 aa)) form a cross-link, tryptophyl-tyrosyl-methioninium (Trp-Tyr) (with M-245). H98 acts as the Proton acceptor in catalysis. The tryptophyl-tyrosyl-methioninium (Tyr-Met) (with W-97) cross-link spans 219–245 (YVNPEGPNGNPDPIAAARDIRETFSRM). H260 lines the heme b pocket.

It belongs to the peroxidase family. Peroxidase/catalase subfamily. As to quaternary structure, homodimer or homotetramer. The cofactor is heme b. Post-translationally, formation of the three residue Trp-Tyr-Met cross-link is important for the catalase, but not the peroxidase activity of the enzyme.

The enzyme catalyses H2O2 + AH2 = A + 2 H2O. It catalyses the reaction 2 H2O2 = O2 + 2 H2O. Its function is as follows. Bifunctional enzyme with both catalase and broad-spectrum peroxidase activity. This is Catalase-peroxidase from Allorhizobium ampelinum (strain ATCC BAA-846 / DSM 112012 / S4) (Agrobacterium vitis (strain S4)).